We begin with the raw amino-acid sequence, 485 residues long: CCA-adding enzyme (485 aa).

S53 and R56 together coordinate ATP. S53 and R56 together coordinate CTP. Residues D65, D67, and D124 each contribute to the Mg(2+) site. ATP is bound by residues H146, K164, and Y173. H146, K164, and Y173 together coordinate CTP.

It belongs to the tRNA nucleotidyltransferase/poly(A) polymerase family. Archaeal CCA-adding enzyme subfamily. As to quaternary structure, homodimer. Mg(2+) serves as cofactor.

It catalyses the reaction a tRNA precursor + 2 CTP + ATP = a tRNA with a 3' CCA end + 3 diphosphate. The enzyme catalyses a tRNA with a 3' CCA end + 2 CTP + ATP = a tRNA with a 3' CCACCA end + 3 diphosphate. Its function is as follows. Catalyzes the addition and repair of the essential 3'-terminal CCA sequence in tRNAs without using a nucleic acid template. Adds these three nucleotides in the order of C, C, and A to the tRNA nucleotide-73, using CTP and ATP as substrates and producing inorganic pyrophosphate. tRNA 3'-terminal CCA addition is required both for tRNA processing and repair. Also involved in tRNA surveillance by mediating tandem CCA addition to generate a CCACCA at the 3' terminus of unstable tRNAs. While stable tRNAs receive only 3'-terminal CCA, unstable tRNAs are marked with CCACCA and rapidly degraded. The sequence is that of CCA-adding enzyme from Methanopyrus kandleri (strain AV19 / DSM 6324 / JCM 9639 / NBRC 100938).